Here is a 220-residue protein sequence, read N- to C-terminus: 14-3-3-like protein (220 aa).

This sequence belongs to the 14-3-3 family.

The polypeptide is 14-3-3-like protein (Spinacia oleracea (Spinach)).